The chain runs to 294 residues: Small ribosomal subunit protein uS2 (294 aa).

The tract at residues 232–294 is disordered; the sequence is RATGTTEAPE…SAAGEADAAK (63 aa). Basic and acidic residues predominate over residues 246 to 259; that stretch reads EWERELLEGSKSEE. A compositionally biased stretch (low complexity) spans 260–294; it reads AAAPAAAEEAPAAAEEAPAAAEATESAAGEADAAK.

The protein belongs to the universal ribosomal protein uS2 family.

This is Small ribosomal subunit protein uS2 from Arthrobacter sp. (strain FB24).